The following is a 484-amino-acid chain: ATP synthase subunit beta (484 aa).

168–175 contacts ATP; that stretch reads GGAGVGKT.

This sequence belongs to the ATPase alpha/beta chains family. F-type ATPases have 2 components, CF(1) - the catalytic core - and CF(0) - the membrane proton channel. CF(1) has five subunits: alpha(3), beta(3), gamma(1), delta(1), epsilon(1). CF(0) has three main subunits: a(1), b(2) and c(9-12). The alpha and beta chains form an alternating ring which encloses part of the gamma chain. CF(1) is attached to CF(0) by a central stalk formed by the gamma and epsilon chains, while a peripheral stalk is formed by the delta and b chains.

It localises to the cell membrane. It carries out the reaction ATP + H2O + 4 H(+)(in) = ADP + phosphate + 5 H(+)(out). In terms of biological role, produces ATP from ADP in the presence of a proton gradient across the membrane. The catalytic sites are hosted primarily by the beta subunits. The polypeptide is ATP synthase subunit beta (Pseudarthrobacter chlorophenolicus (strain ATCC 700700 / DSM 12829 / CIP 107037 / JCM 12360 / KCTC 9906 / NCIMB 13794 / A6) (Arthrobacter chlorophenolicus)).